The sequence spans 78 residues: Large ribosomal subunit protein bL28 (78 aa).

Positions 1–21 (MSRVCQVTGKKPMVGNNRSHA) are disordered.

The protein belongs to the bacterial ribosomal protein bL28 family.

In Shewanella loihica (strain ATCC BAA-1088 / PV-4), this protein is Large ribosomal subunit protein bL28.